The chain runs to 135 residues: Holo-[acyl-carrier-protein] synthase (135 aa).

Residues D8 and E57 each coordinate Mg(2+).

Belongs to the P-Pant transferase superfamily. AcpS family. The cofactor is Mg(2+).

It is found in the cytoplasm. The enzyme catalyses apo-[ACP] + CoA = holo-[ACP] + adenosine 3',5'-bisphosphate + H(+). Its function is as follows. Transfers the 4'-phosphopantetheine moiety from coenzyme A to a Ser of acyl-carrier-protein. The chain is Holo-[acyl-carrier-protein] synthase from Xanthobacter autotrophicus (strain ATCC BAA-1158 / Py2).